We begin with the raw amino-acid sequence, 172 residues long: Small ribosomal subunit protein uS5 (172 aa).

One can recognise an S5 DRBM domain in the interval 17–80 (LREKMISVNR…DEARRKMVKV (64 aa)).

This sequence belongs to the universal ribosomal protein uS5 family. As to quaternary structure, part of the 30S ribosomal subunit. Contacts proteins S4 and S8.

Its function is as follows. With S4 and S12 plays an important role in translational accuracy. Functionally, located at the back of the 30S subunit body where it stabilizes the conformation of the head with respect to the body. This is Small ribosomal subunit protein uS5 from Cupriavidus pinatubonensis (strain JMP 134 / LMG 1197) (Cupriavidus necator (strain JMP 134)).